Reading from the N-terminus, the 372-residue chain is Putative glutamate--cysteine ligase 2 (372 aa).

The protein belongs to the glutamate--cysteine ligase type 2 family. YbdK subfamily. In terms of assembly, homodimer.

The enzyme catalyses L-cysteine + L-glutamate + ATP = gamma-L-glutamyl-L-cysteine + ADP + phosphate + H(+). ATP-dependent carboxylate-amine ligase which exhibits weak glutamate--cysteine ligase activity. The chain is Putative glutamate--cysteine ligase 2 (ybdK) from Salmonella arizonae (strain ATCC BAA-731 / CDC346-86 / RSK2980).